The sequence spans 332 residues: Glyceraldehyde-3-phosphate dehydrogenase 1 (332 aa).

Residues R11, I12, D33, and T120 each contribute to the NAD(+) site. D-glyceraldehyde 3-phosphate-binding positions include 149 to 151 (SCT), T180, 209 to 210 (TG), and R232. C150 acts as the Nucleophile in catalysis. N314 and Y318 together coordinate NAD(+).

Belongs to the glyceraldehyde-3-phosphate dehydrogenase family. In terms of assembly, homotetramer.

The protein resides in the cytoplasm. It carries out the reaction D-glyceraldehyde 3-phosphate + phosphate + NAD(+) = (2R)-3-phospho-glyceroyl phosphate + NADH + H(+). The enzyme catalyses NADH + H2O = (6R)-NADHX. The catalysed reaction is NADH + H2O = (6S)-NADHX. It catalyses the reaction NADPH + H2O = (6R)-NADPHX. It carries out the reaction NADPH + H2O = (6S)-NADPHX. It participates in carbohydrate degradation; glycolysis; pyruvate from D-glyceraldehyde 3-phosphate: step 1/5. Functionally, glyceraldehyde-3-phosphate dehydrogenase (GAPDH) involved in glycolysis and gluconeogenesis. Catalyzes the reaction of glyceraldehyde-3-phosphate to 1,3 bis-phosphoglycerate. The contribution of the TDH1, TDH2, and TDH3 to the total glyceraldehyde-3-phosphate dehydrogenase activity is 10-15, 25-30, and 50-60%, respectively. May be involved in a process other than glycolysis because it is synthesized by cells in stationary phase. In terms of biological role, as a side activity, catalyzes the hydration of the nicotinamide ring of NADH or NADPH at the C6 position to give the corresponding hydrates, NADHX and NADPHX, which exist as R and S epimers, that cannot act as electron donors or acceptors and inhibit several dehydrogenases, making them toxic. In Saccharomyces cerevisiae (strain ATCC 204508 / S288c) (Baker's yeast), this protein is Glyceraldehyde-3-phosphate dehydrogenase 1.